A 577-amino-acid polypeptide reads, in one-letter code: Urease subunit alpha (577 aa).

Residues 136–577 (GAIDCHVHLI…LPMAQRYFLF (442 aa)) form the Urease domain. Ni(2+) is bound by residues histidine 141, histidine 143, and lysine 224. The residue at position 224 (lysine 224) is an N6-carboxylysine. Residue histidine 226 participates in substrate binding. Residues histidine 253 and histidine 279 each coordinate Ni(2+). Histidine 327 functions as the Proton donor in the catalytic mechanism. Aspartate 367 provides a ligand contact to Ni(2+).

The protein belongs to the metallo-dependent hydrolases superfamily. Urease alpha subunit family. As to quaternary structure, heterotrimer of UreA (gamma), UreB (beta) and UreC (alpha) subunits. Three heterotrimers associate to form the active enzyme. Ni cation is required as a cofactor. In terms of processing, carboxylation allows a single lysine to coordinate two nickel ions.

It is found in the cytoplasm. It carries out the reaction urea + 2 H2O + H(+) = hydrogencarbonate + 2 NH4(+). It functions in the pathway nitrogen metabolism; urea degradation; CO(2) and NH(3) from urea (urease route): step 1/1. This chain is Urease subunit alpha, found in Mycobacterium ulcerans (strain Agy99).